The following is a 530-amino-acid chain: Autoinducer-2 kinase (530 aa).

This sequence belongs to the FGGY kinase family.

It localises to the cytoplasm. It carries out the reaction (S)-4,5-dihydroxypentane-2,3-dione + ATP = (2S)-2-hydroxy-3,4-dioxopentyl phosphate + ADP + H(+). Functionally, catalyzes the phosphorylation of autoinducer-2 (AI-2) to phospho-AI-2, which subsequently inactivates the transcriptional regulator LsrR and leads to the transcription of the lsr operon. Phosphorylates the ring-open form of (S)-4,5-dihydroxypentane-2,3-dione (DPD), which is the precursor to all AI-2 signaling molecules, at the C5 position. This is Autoinducer-2 kinase from Enterobacter sp. (strain 638).